Reading from the N-terminus, the 3165-residue chain is Protein eyes shut homolog (3165 aa).

The first 21 residues, 1-21 (MTDKSIVILSLMVFHSSFING), serve as a signal peptide directing secretion. Residue asparagine 166 is glycosylated (N-linked (GlcNAc...) asparagine). EGF-like domains lie at 170–212 (KQQF…KYCQ), 213–254 (ELDA…KNCS), and 256–292 (IIGQ…PFCE). Intrachain disulfides connect cysteine 174–cysteine 189, cysteine 183–cysteine 200, cysteine 202–cysteine 211, cysteine 217–cysteine 228, cysteine 222–cysteine 242, cysteine 244–cysteine 253, cysteine 260–cysteine 270, cysteine 265–cysteine 280, and cysteine 282–cysteine 291. 2 N-linked (GlcNAc...) asparagine glycosylation sites follow: asparagine 269 and asparagine 272. N-linked (GlcNAc...) asparagine glycosylation is found at asparagine 311 and asparagine 343. EGF-like domains follow at residues 332–368 (DVSE…LLCK) and 370–406 (IQTS…KNCE). Intrachain disulfides connect cysteine 341/cysteine 356, cysteine 358/cysteine 367, cysteine 374/cysteine 385, and cysteine 396/cysteine 405. Asparagine 506 and asparagine 566 each carry an N-linked (GlcNAc...) asparagine glycan. EGF-like domains follow at residues 567 to 602 (TTDD…RLCV) and 643 to 679 (DTED…TQCE). Disulfide bonds link cysteine 575-cysteine 590, cysteine 592-cysteine 601, cysteine 669-cysteine 678, cysteine 685-cysteine 696, cysteine 690-cysteine 705, cysteine 707-cysteine 719, cysteine 737-cysteine 748, cysteine 742-cysteine 757, cysteine 759-cysteine 768, cysteine 775-cysteine 786, cysteine 780-cysteine 795, cysteine 797-cysteine 806, cysteine 813-cysteine 824, cysteine 818-cysteine 835, cysteine 837-cysteine 846, cysteine 853-cysteine 866, cysteine 860-cysteine 876, cysteine 878-cysteine 887, cysteine 894-cysteine 905, cysteine 899-cysteine 914, cysteine 916-cysteine 925, cysteine 932-cysteine 943, cysteine 937-cysteine 952, cysteine 954-cysteine 963, cysteine 970-cysteine 981, cysteine 975-cysteine 990, cysteine 992-cysteine 1001, cysteine 1008-cysteine 1019, cysteine 1013-cysteine 1028, cysteine 1030-cysteine 1039, cysteine 1046-cysteine 1056, cysteine 1051-cysteine 1065, cysteine 1067-cysteine 1076, cysteine 1083-cysteine 1094, cysteine 1088-cysteine 1103, cysteine 1105-cysteine 1114, cysteine 1121-cysteine 1137, cysteine 1131-cysteine 1147, cysteine 1149-cysteine 1158, cysteine 1165-cysteine 1176, cysteine 1170-cysteine 1185, cysteine 1187-cysteine 1196, cysteine 2037-cysteine 2063, cysteine 2103-cysteine 2114, cysteine 2108-cysteine 2128, and cysteine 2130-cysteine 2139. One can recognise an EGF-like 8; calcium-binding domain in the interval 681-720 (DIDECASHPCKNGATCIDQPGNYFCQCVPPFKVVDGFSCL). The region spanning 733–769 (DIDDCILNACEHNSTCKDLHLSYQCVCLSDWEGNFCE) is the EGF-like 9; calcium-binding domain. The 37-residue stretch at 771-807 (ESNECKMNPCKNNSTCTDLYKSYRCECTSGWTGQNCS) folds into the EGF-like 10; calcium-binding domain. EGF-like domains lie at 809-847 (EINE…QFCH), 849-888 (RYNL…KNCE), and 890-926 (DVKD…SLCE). An EGF-like 14; calcium-binding domain is found at 928–964 (EINECSSEPCKNNGTCVDLTNRFFCNCEPEYHGPFCE). The 37-residue stretch at 966 to 1002 (DVNKCKISPCLDEENCVYRTDGYNCLCAPGYTGINCE) folds into the EGF-like 15 domain. Residues 1004–1040 (NLDECLSEPCLHDGVCIDGINHYTCDCKSGFFGTHCE) enclose the EGF-like 16; calcium-binding domain. EGF-like domains follow at residues 1042-1077 (NAND…TQCK), 1079-1115 (KIND…AYCE), and 1117-1159 (SIDN…QFCE). Residues 1161-1197 (NINECSSSPCLHGADCEDHINGYVCKCQPGWSGHHCE) form the EGF-like 20; calcium-binding domain. The region spanning 1883-2063 (FSCVRYYGDS…AVKNYHINNC (181 aa)) is the Laminin G-like 1 domain. One can recognise an EGF-like 21 domain in the interval 2099–2140 (APSVCQQDVCHNGGTCHAIFLSSGIVSFQCDCPLHFTGRFCE). In terms of domain architecture, Laminin G-like 2 spans 2145–2339 (LFFPSFNGNS…NIENCHVPWC (195 aa)). Asparagine 2170 carries an N-linked (GlcNAc...) asparagine glycan. EGF-like domains follow at residues 2335–2368 (HVPW…YSGK) and 2371–2408 (QFAS…PLCT). Cystine bridges form between cysteine 2339/cysteine 2350, cysteine 2344/cysteine 2359, cysteine 2375/cysteine 2386, cysteine 2380/cysteine 2396, cysteine 2398/cysteine 2407, cysteine 2576/cysteine 2609, cysteine 2614/cysteine 2625, cysteine 2619/cysteine 2634, cysteine 2636/cysteine 2645, cysteine 2652/cysteine 2668, cysteine 2662/cysteine 2677, cysteine 2679/cysteine 2688, cysteine 2868/cysteine 2895, cysteine 2900/cysteine 2911, cysteine 2905/cysteine 2920, cysteine 2922/cysteine 2931, cysteine 2937/cysteine 2948, cysteine 2942/cysteine 2958, and cysteine 2960/cysteine 2969. One can recognise a Laminin G-like 3 domain in the interval 2419–2609 (SGTDAFGYTS…PNAGRSVGQC (191 aa)). 2 EGF-like domains span residues 2610–2646 (HASP…SFCT) and 2648–2689 (TVST…IYCE). A Laminin G-like 4 domain is found at 2717-2895 (DPSFRSNELS…AKGGSNVGDC (179 aa)). EGF-like domains follow at residues 2896–2932 (DGTA…NTCN) and 2933–2970 (QSVS…RYCE). The Laminin G-like 5 domain occupies 2975–3165 (FSTAKFMGNS…YDGDEQNEVT (191 aa)).

Belongs to the EYS family. Expressed in retina (at protein level). Isoform 1: Detected in retina. Isoform 2: Detected in retina. Isoform 3: Strongly expressed in retina and testis. Isoform 4: Strongly expressed in testis, and weakly expressed in retina.

It localises to the cell projection. The protein resides in the cilium. The protein localises to the photoreceptor outer segment. It is found in the cytoplasm. Its subcellular location is the cytoskeleton. It localises to the cilium axoneme. The protein resides in the microtubule organizing center. The protein localises to the centrosome. It is found in the secreted. Its subcellular location is the extracellular space. It localises to the extracellular matrix. The protein resides in the interphotoreceptor matrix. Functionally, required to maintain the integrity of photoreceptor cells. Specifically required for normal morphology of the photoreceptor ciliary pocket, and might thus facilitate protein trafficking between the photoreceptor inner and outer segments via the transition zone. The polypeptide is Protein eyes shut homolog (EYS) (Homo sapiens (Human)).